We begin with the raw amino-acid sequence, 279 residues long: Undecaprenyl-diphosphatase (279 aa).

Helical transmembrane passes span 45 to 65 (FVEMFNIVIQLGAIMAVIVIY), 85 to 105 (WQLWLKVVIACIPSILIALPF), 113 to 133 (FNFMIPIAIALIFYGFVFIWV), 188 to 208 (SVAADFTFFLAIPTMFGYSGL), 226 to 246 (LILLVASLTAFVVSLYVIRFL), and 255 to 275 (FTIFGKYRIVLGSLLILYWLV).

It belongs to the UppP family.

The protein localises to the cell membrane. It catalyses the reaction di-trans,octa-cis-undecaprenyl diphosphate + H2O = di-trans,octa-cis-undecaprenyl phosphate + phosphate + H(+). Catalyzes the dephosphorylation of undecaprenyl diphosphate (UPP). Confers resistance to bacitracin. In Streptococcus agalactiae serotype III (strain NEM316), this protein is Undecaprenyl-diphosphatase.